A 126-amino-acid chain; its full sequence is Protein ApaG (126 aa).

The ApaG domain maps to 2-126 (TSLEDSIKVE…FRLAVPGMLH (125 aa)).

The polypeptide is Protein ApaG (Shewanella sediminis (strain HAW-EB3)).